The chain runs to 404 residues: Glutamyl-tRNA reductase (404 aa).

Substrate-binding positions include 47–50 (TCNR), S94, 99–101 (EQE), and Q105. The Nucleophile role is filled by C48. Residue 174–179 (GAGEMG) participates in NADP(+) binding.

As to quaternary structure, homotetramer.

The catalysed reaction is (S)-4-amino-5-oxopentanoate + tRNA(Glu) + NADP(+) = L-glutamyl-tRNA(Glu) + NADPH + H(+). It functions in the pathway porphyrin-containing compound metabolism; protoporphyrin-IX biosynthesis; 5-aminolevulinate from L-glutamyl-tRNA(Glu): step 1/2. Its activity is regulated as follows. Inhibited by heavy metal compounds, Zn(2+), and heme. Also competitively inhibited by glutamycin. Its function is as follows. Catalyzes the NADPH-dependent reduction of glutamyl-tRNA(Glu) to glutamate 1-semialdehyde (GSA). In the absence of NADPH, exhibits substrate esterase activity, leading to the release of glutamate from tRNA. The polypeptide is Glutamyl-tRNA reductase (hemA) (Methanopyrus kandleri (strain AV19 / DSM 6324 / JCM 9639 / NBRC 100938)).